The following is a 319-amino-acid chain: MFRFDKEQMVIDFAGAKFGGQPGEYPTALSGTIFYARHKIVEDAKKGIFDKKAAEALINKQAEMQDITGNSALVQVFGGTEEALVNYIDFVSEVWEGPMLLDSTSGKARMAAAKRATEAGYAKQCIYNSINVSIDEEEFQSLAESDVEASIVLCFDPMDPSVEGKLNVLNNGGKTKDVGMLDLAEKAGIKYPLIDVAVTPMGAGAGNAVRASFAVKAKLGLAVGSGIHNVPSAWDWLREFRKGLREEGKEQIAKDVHHVCDIGANIVQTMASGDFVLYGPIDNAELAFPAVAMTDMIIAETAKELGTTPAAVHPLNKLI.

The protein belongs to the MtrH family. The complex is composed of 8 subunits; MtrA, MtrB, MtrC, MtrD, MtrE, MtrF, MtrG and MtrH.

It carries out the reaction 5-methyl-5,6,7,8-tetrahydromethanopterin + coenzyme M + 2 Na(+)(in) = 5,6,7,8-tetrahydromethanopterin + methyl-coenzyme M + 2 Na(+)(out). Its pathway is one-carbon metabolism; methanogenesis from CO(2); methyl-coenzyme M from 5,10-methylene-5,6,7,8-tetrahydromethanopterin: step 2/2. Part of a complex that catalyzes the formation of methyl-coenzyme M and tetrahydromethanopterin from coenzyme M and methyl-tetrahydromethanopterin. This is an energy-conserving, sodium-ion translocating step. MtrH catalyzes the transfer of the methyl group from methyl-tetrahydromethanopterin to the corrinoid prosthetic group of MtrA. The polypeptide is Tetrahydromethanopterin S-methyltransferase subunit H (Methanococcus vannielii (strain ATCC 35089 / DSM 1224 / JCM 13029 / OCM 148 / SB)).